The chain runs to 31 residues: Cyclotide mech-4 (31 aa).

The segment at residues 1–31 (GSIPCGESCVYIPCISSLLGCSCKSKVCYKD) is a cross-link (cyclopeptide (Gly-Asp)). Cystine bridges form between C5/C21, C9/C23, and C14/C28.

Post-translationally, this is a cyclic peptide. In terms of processing, contains 3 disulfide bonds.

Functionally, probably participates in a plant defense mechanism (Potential). Binds to and induces leakage in phospholipd membranes, particularly ones containing 1-palmitoyl-2-oleophosphatidylethanolamine (POPE). In Melicytus chathamicus (Chatham Island mahoe), this protein is Cyclotide mech-4.